A 188-amino-acid chain; its full sequence is Elongation factor P (188 aa).

Residue Lys-34 is modified to N6-(3,6-diaminohexanoyl)-5-hydroxylysine.

It belongs to the elongation factor P family. Is beta-lysylated on the epsilon-amino group of Lys-34 by the combined action of EpmA and EpmB, and then hydroxylated on the C5 position of the same residue by EpmC. Lysylation is critical for the stimulatory effect of EF-P on peptide-bond formation. The lysylation moiety would extend toward the peptidyltransferase center and stabilize the terminal 3-CCA end of the tRNA. The hydroxylation of the C5 position on Lys-34 would allow additional potential stabilizing hydrogen-bond interactions with the P-tRNA.

Its subcellular location is the cytoplasm. The protein operates within protein biosynthesis; polypeptide chain elongation. Its function is as follows. Involved in peptide bond synthesis. Alleviates ribosome stalling that occurs when 3 or more consecutive Pro residues or the sequence PPG is present in a protein, possibly by augmenting the peptidyl transferase activity of the ribosome. Modification of Lys-34 is required for alleviation. This chain is Elongation factor P, found in Shigella boydii serotype 18 (strain CDC 3083-94 / BS512).